Here is an 802-residue protein sequence, read N- to C-terminus: Penicillin G acylase (802 aa).

The first 26 residues, 1–26 (MKMKWLISVIILFVFIFPQNLVFAGE), serve as a signal peptide directing secretion. Position 177 (E177) interacts with Ca(2+). Positions 235 to 265 (SAVIKASEKVGKERENFVQSSEELGLPLKIG) are cleaved as a propeptide — spacer peptide. S266 functions as the Nucleophile in the catalytic mechanism. Ca(2+) is bound at residue D341.

The protein belongs to the peptidase S45 family. In terms of assembly, heterodimer of an alpha subunit and a beta subunit processed from the same precursor. Ca(2+) is required as a cofactor.

The protein localises to the secreted. The enzyme catalyses a penicillin + H2O = 6-aminopenicillanate + a carboxylate. This Rhizobium viscosum (Arthrobacter viscosus) protein is Penicillin G acylase (pac).